Here is a 196-residue protein sequence, read N- to C-terminus: MAFKDWMNNLRDYFVEDDEEFNEPTRPVQESRPTVASTPKPKVEERKVQADYQSRRPAQSTPKPQAQTAAPKRSASTFSKPMPEKIVQQQTVSQAQSLAATVSTIAIKEPRAYADIMESARIVKNGECVLVNFKFMGDAQARRSIDFMTGVVFTLDGDIQNVGGQIFLMTPANITVDAAKEMSILAGKNFESYDIY.

Residues V15–K80 form a disordered region. Positions R56–S79 are enriched in polar residues.

It belongs to the SepF family. In terms of assembly, homodimer. Interacts with FtsZ.

It is found in the cytoplasm. Cell division protein that is part of the divisome complex and is recruited early to the Z-ring. Probably stimulates Z-ring formation, perhaps through the cross-linking of FtsZ protofilaments. Its function overlaps with FtsA. The chain is Cell division protein SepF from Lactococcus lactis subsp. cremoris (strain SK11).